The sequence spans 498 residues: MPLVTRNIEPRHLCRQTLPSVRSELECVTNITLANVIRQLGSLSKYAEDIFGELFTQANTFASRVSSLAERVDRLQVKVTQLDPKEEEVSLQGINTRKAFRSSTIQDQKLFDRNSLPVPVLETYNTCDTPPPLNNLTPYRDDGKEALKFYTDPSYFFDLWKEKMLQDTKDIMKEKRKHRKEKKDNPNRGNVNPRKIKTRKEEWEKMKMGQEFVESKEKLGTSGYPPTLVYQNGSIGCVENVDASSYPPPPQSDSASSPSPSFSEDNLPPPPAEFSYPVDNQRGSGLAGPKRSSVVSPSHPPPAPPLGSPPGPKPGFAPPPAPPPPPPPMIGIPPPPPPVGFGSPGTPPPPSPPSFPPHPDFAAPPPPPPPPAADYPTLPPPPLSQPTGGAPPPPPPPPPPGPPPPPFTGADGQPAIPPPLSDTTKPKSSLPAVSDARSDLLSAIRQGFQLRRVEEQREQEKRDVVGNDVATILSRRIAVEYSDSEDDSSEFDEDDWSD.

2 disordered regions span residues 173 to 203 and 240 to 435; these read KEKR…KEEW and NVDA…AVSD. The segment covering 252–263 has biased composition (low complexity); it reads SDSASSPSPSFS. The segment covering 298–407 has biased composition (pro residues); the sequence is SHPPPAPPLG…PPPGPPPPPF (110 aa). Positions 436–453 constitute a WH2 domain; it reads ARSDLLSAIRQGFQLRRV. Position 474 is a phosphoserine (serine 474).

It belongs to the SCAR/WAVE family. Binds actin and the Arp2/3 complex. Interacts with BAIAP2. Component of the WAVE2 complex composed of ABI1, CYFIP1/SRA1, NCKAP1/NAP1 (NCKAP1l/HEM1 in hematopoietic cells) and WASF2/WAVE2. Directly interacts with BRK1. Interacts with FNBP1L (via the SH3 domain). As to quaternary structure, (Microbial infection) Interacts with human cytomegalovirus protein UL135. Expressed in all tissues with strongest expression in placenta, lung, and peripheral blood leukocytes, but not in skeletal muscle.

The protein localises to the cytoplasm. The protein resides in the cytoskeleton. It localises to the cell projection. It is found in the lamellipodium. Its subcellular location is the basolateral cell membrane. Its function is as follows. Downstream effector molecule involved in the transmission of signals from tyrosine kinase receptors and small GTPases to the actin cytoskeleton. Promotes formation of actin filaments. Part of the WAVE complex that regulates lamellipodia formation. The WAVE complex regulates actin filament reorganization via its interaction with the Arp2/3 complex. The polypeptide is Actin-binding protein WASF2 (Homo sapiens (Human)).